A 402-amino-acid chain; its full sequence is Serine/threonine transporter SstT (402 aa).

A run of 8 helical transmembrane segments spans residues 17-37, 44-64, 78-98, 138-158, 179-199, 212-232, 295-315, and 336-356; these read IAIGVVIGAILGLLIPKITVI, FVGGLKAIAPLLVSALVANAL, IIVLYLFGTFAAALTAVISHY, ALSQANYIGVLLWAVVFGFAM, IVRWIINLAPFGILGLVFDTI, VLILVLVGTMTFVALVINPII, MAGAAVTINVLTLAAVTTLGI, and ASGIAGGSLLLVPVACSLFGI.

This sequence belongs to the dicarboxylate/amino acid:cation symporter (DAACS) (TC 2.A.23) family.

It localises to the cell membrane. The enzyme catalyses L-serine(in) + Na(+)(in) = L-serine(out) + Na(+)(out). The catalysed reaction is L-threonine(in) + Na(+)(in) = L-threonine(out) + Na(+)(out). Its function is as follows. Involved in the import of serine and threonine into the cell, with the concomitant import of sodium (symport system). In Streptococcus thermophilus (strain CNRZ 1066), this protein is Serine/threonine transporter SstT.